Here is a 2063-residue protein sequence, read N- to C-terminus: Rho guanine nucleotide exchange factor 17 (2063 aa).

4 disordered regions span residues 22–365 (WSGG…MSDS), 380–466 (YLAS…SNPD), 485–581 (LRVR…AEED), and 602–958 (IQRM…RHVR). The segment covering 65–76 (PLAAPAQPRPLR) has biased composition (low complexity). The span at 87–96 (RRFDAPRLDD) shows a compositional bias: basic and acidic residues. Positions 108–122 (PAAAEEAAEGPARGA) are enriched in low complexity. Phosphoserine is present on residues serine 142 and serine 152. Residues 225–250 (AGARASCSSSSIAASYPVSRSRAASS) show a composition bias toward low complexity. Serine 310 carries the post-translational modification Phosphoserine. Positions 313-323 (LNLSSMNSAGV) are enriched in polar residues. A phosphoserine mark is found at serine 326, serine 332, serine 383, serine 387, serine 395, serine 410, and serine 420. A compositionally biased stretch (polar residues) spans 388-397 (RGSSRYSSTE). The span at 445-456 (ALRDGGFEPEKS) shows a compositional bias: basic and acidic residues. 2 positions are modified to phosphoserine: serine 461 and serine 546. Residues 562-573 (SALKSSSSELLL) show a composition bias toward low complexity. The residue at position 619 (serine 619) is a Phosphoserine. Residues 671 to 680 (LSSSSAQTNH) show a composition bias toward polar residues. Position 696 is a phosphoserine (serine 696). Phosphothreonine is present on residues threonine 699 and threonine 702. The residue at position 735 (serine 735) is a Phosphoserine. The segment covering 754–765 (SVDSNLLGSLSP) has biased composition (polar residues). Basic and acidic residues predominate over residues 827–836 (SLSDPSRRGE). Residue serine 914 is modified to Phosphoserine. The span at 917–928 (LIRRGSKKRPAR) shows a compositional bias: basic residues. The segment covering 930 to 939 (SHQELRRDEG) has biased composition (basic and acidic residues). A phosphoserine mark is found at serine 961 and serine 1002. The disordered stretch occupies residues 1034-1060 (APPSAEAKPPEAARPADEPTPASKCCS). Over residues 1041–1050 (KPPEAARPAD) the composition is skewed to basic and acidic residues. The DH domain occupies 1066–1254 (MRKHVAMTLL…KQVAERINKG (189 aa)). Serine 1331 is subject to Phosphoserine. Disordered stretches follow at residues 1564–1584 (HREP…PAGP), 1616–1719 (GLEM…SSHG), 1991–2020 (TPPP…PAPA), and 2036–2055 (FRLS…DDST). The segment covering 1568 to 1582 (PPSLRSPPETAPEPA) has biased composition (pro residues). A compositionally biased stretch (low complexity) spans 1644 to 1680 (SPSPSGTLQSQASRSTISSSFGNEETPSSKEATAETT). The segment covering 2004–2013 (PSLEHRDSPW) has biased composition (basic and acidic residues).

As to expression, highly expressed in the heart.

Functionally, acts as a guanine nucleotide exchange factor (GEF) for RhoA GTPases. This Homo sapiens (Human) protein is Rho guanine nucleotide exchange factor 17 (ARHGEF17).